Consider the following 133-residue polypeptide: Putative elongation factor 1-delta-like protein (133 aa).

Positions 58-73 are enriched in low complexity; sequence SLAGSLGPGASSGPSG. Disordered stretches follow at residues 58 to 77 and 89 to 133; these read SLAGSLGPGASSGPSGDHSE and NQRD…TSRG. Residues 89–102 are compositionally biased toward basic and acidic residues; the sequence is NQRDLAERAGEELA.

This sequence belongs to the EF-1-beta/EF-1-delta family.

This is Putative elongation factor 1-delta-like protein (EEF1DP3) from Homo sapiens (Human).